We begin with the raw amino-acid sequence, 139 residues long: Trafficking protein particle complex subunit 2-like protein (139 aa).

It belongs to the TRAPP small subunits family. Sedlin subfamily. As to quaternary structure, component of the multisubunit TRAPP (transport protein particle) complex, which includes at least TRAPPC2, TRAPPC2L, TRAPPC3, TRAPPC3L, TRAPPC4, TRAPPC5, TRAPPC8, TRAPPC9, TRAPPC10, TRAPPC11 and TRAPPC12. Interacts with the heterodimer TRAPPC3-TRAPPC6A.

The protein localises to the cytoplasm. It is found in the perinuclear region. It localises to the endoplasmic reticulum. Its subcellular location is the golgi apparatus. Its function is as follows. May play a role in vesicular transport from endoplasmic reticulum to Golgi. This chain is Trafficking protein particle complex subunit 2-like protein (Trappc2l), found in Rattus norvegicus (Rat).